The sequence spans 245 residues: 1-(5-phosphoribosyl)-5-[(5-phosphoribosylamino)methylideneamino] imidazole-4-carboxamide isomerase (245 aa).

The active-site Proton acceptor is D13. The Proton donor role is filled by D132.

It belongs to the HisA/HisF family.

The protein localises to the cytoplasm. It catalyses the reaction 1-(5-phospho-beta-D-ribosyl)-5-[(5-phospho-beta-D-ribosylamino)methylideneamino]imidazole-4-carboxamide = 5-[(5-phospho-1-deoxy-D-ribulos-1-ylimino)methylamino]-1-(5-phospho-beta-D-ribosyl)imidazole-4-carboxamide. Its pathway is amino-acid biosynthesis; L-histidine biosynthesis; L-histidine from 5-phospho-alpha-D-ribose 1-diphosphate: step 4/9. The sequence is that of 1-(5-phosphoribosyl)-5-[(5-phosphoribosylamino)methylideneamino] imidazole-4-carboxamide isomerase from Frankia alni (strain DSM 45986 / CECT 9034 / ACN14a).